Consider the following 290-residue polypeptide: Acetyl-coenzyme A carboxylase carboxyl transferase subunit beta (290 aa).

A CoA carboxyltransferase N-terminal domain is found at 27 to 290; the sequence is LWVKCPSCES…LQKQPADAVA (264 aa). Cys-31, Cys-34, Cys-50, and Cys-53 together coordinate Zn(2+). A C4-type zinc finger spans residues 31–53; sequence CPSCESTLYRTDVEANLHVCPKC.

The protein belongs to the AccD/PCCB family. As to quaternary structure, acetyl-CoA carboxylase is a heterohexamer composed of biotin carboxyl carrier protein (AccB), biotin carboxylase (AccC) and two subunits each of ACCase subunit alpha (AccA) and ACCase subunit beta (AccD). Requires Zn(2+) as cofactor.

It is found in the cytoplasm. It catalyses the reaction N(6)-carboxybiotinyl-L-lysyl-[protein] + acetyl-CoA = N(6)-biotinyl-L-lysyl-[protein] + malonyl-CoA. The protein operates within lipid metabolism; malonyl-CoA biosynthesis; malonyl-CoA from acetyl-CoA: step 1/1. Component of the acetyl coenzyme A carboxylase (ACC) complex. Biotin carboxylase (BC) catalyzes the carboxylation of biotin on its carrier protein (BCCP) and then the CO(2) group is transferred by the transcarboxylase to acetyl-CoA to form malonyl-CoA. This Cupriavidus taiwanensis (strain DSM 17343 / BCRC 17206 / CCUG 44338 / CIP 107171 / LMG 19424 / R1) (Ralstonia taiwanensis (strain LMG 19424)) protein is Acetyl-coenzyme A carboxylase carboxyl transferase subunit beta.